Reading from the N-terminus, the 108-residue chain is uncharacterized protein (108 aa).

The segment at 81 to 108 is disordered; the sequence is FKCLDSPPPVPPSSSQGEDEENTVDSQY. The span at 97–108 shows a compositional bias: acidic residues; the sequence is GEDEENTVDSQY.

This is an uncharacterized protein from Saccharomyces cerevisiae (strain ATCC 204508 / S288c) (Baker's yeast).